We begin with the raw amino-acid sequence, 218 residues long: Thiopurine S-methyltransferase (218 aa).

Residues Trp-10, Leu-45, Glu-66, and Arg-123 each contribute to the S-adenosyl-L-methionine site.

It belongs to the class I-like SAM-binding methyltransferase superfamily. TPMT family.

The protein localises to the cytoplasm. It carries out the reaction S-adenosyl-L-methionine + a thiopurine = S-adenosyl-L-homocysteine + a thiopurine S-methylether.. This Xanthomonas euvesicatoria pv. vesicatoria (strain 85-10) (Xanthomonas campestris pv. vesicatoria) protein is Thiopurine S-methyltransferase.